The sequence spans 245 residues: MMDPNSTSEDVKFTPDPYQVPFVQAFDQATRVYQDLGGPSQAPLPCVLWPVLPEPLPQGQLTAYHVSTAPTGSWFSAPQPAPENAYQAYAAPQLFPVSDITQNQQTNQAGGEAPQPGDNSTVQTAAAVVFACPGANQGQQLADIGVPQPAPVAAPARRTRKPQQPESLEECDSELEIKRYKNRVASRKCRAKFKQLLQHYREVAAAKSSENDRLRLLLKQMCPSLDVDSIIPRTPDVLHEDLLNF.

Residues 1–167 form a transactivation region; sequence MMDPNSTSED…RTRKPQQPES (167 aa). 2 positions are modified to phosphothreonine; by host: Thr14 and Thr159. Positions 157-194 match the Bipartite nuclear localization signal motif; sequence RRTRKPQQPESLEECDSELEIKRYKNRVASRKCRAKFK. Ser167, Ser173, and Ser186 each carry phosphoserine; by host. The bZIP domain maps to 170-228; the sequence is ECDSELEIKRYKNRVASRKCRAKFKQLLQHYREVAAAKSSENDRLRLLLKQMCPSLDVD. The segment at 178-195 is basic motif; the sequence is KRYKNRVASRKCRAKFKQ. The leucine-zipper stretch occupies residues 196–228; sequence LLQHYREVAAAKSSENDRLRLLLKQMCPSLDVD. Residues 229–245 form an accessory activation domain region; the sequence is SIIPRTPDVLHEDLLNF.

It belongs to the bZIP family. As to quaternary structure, homodimer. Interacts (via b-ZIP domain) with the DNA polymerase processivity factor BMRF1 (via N-terminus); this interaction may inhibit BZLF1-induced transcription of the BMRF1 promoter. Interacts with human UBN1, CRTC2 and RACK1. Interacts (via N-terminus) with human PAX5 (via N-terminus); this interaction inhibits BZLF1-mediated lytic viral reactivation. Interacts (via leucine-zipper domain) with host CEBPA; this interaction induces G1 host cell cycle arrest. Interacts (via C-terminus) with host TP53BP1 (via C-terminus); this interaction is involved in the activation of the viral lytic cycle. Interacts with host chromatin-remodeling ATPase INO80; this interaction participates to the activation of early lytic viral genes by BZLF1. Interacts with host regulator of chromatin SMARCA5/hSNF2H; this interaction participates to the activation of early lytic viral genes by BZLF1. Interacts with host PLSCR1/Phospholipid scramblase 1; this interaction negatively regulates the transcriptional regulatory activity of BZLF1 by preventing the formation of the BZLF1-CBP complex.

The protein localises to the host nucleus. Functionally, transcription factor that acts as a molecular switch to induce the transition from the latent to the lytic or productive phase of the virus cycle. Mediates the switch from the latent to the lytic cycle of infection in cells containing a highly methylated viral genome. Probably binds to silenced chromatin and recruits host chromatin-remodeling enzymes. Regulates this switch by binding to 2 types of ZEBRA response elements (ZREs): the CpG-free AP-1 like elements (latency) and the methylated CpG-containing elements (lytic replication). Activates preferentially the methylated forms of the viral lytic R (BRLF1) and Na (BRRF1) gene promoters, the latters being the first genes activated during Z-mediated reactivation in latently infected cells. BZLF1 and BRLF1 act together to trigger lytic replication. Also binds the lytic origin of replication, oriLyt. Induces G1 cell cycle arrest by stabilizing the host CCAAT/enhancer binding protein CEBPA. This function is important because the lytic cycle preferentially takes place in host cells arrested in G1. This Epstein-Barr virus (strain B95-8) (HHV-4) protein is Lytic switch protein BZLF1.